We begin with the raw amino-acid sequence, 473 residues long: MSATLTGSGTALGFSCSSKISKRVSSSPSTRCSIKMSVSVDEKKKSFTLQKSEEAFNAAKNLMPGGVNSPVRAFKSVGGQPVLIDSVKGSKMWDIDGNEYIDYVGSWGPAIIGHADDEVLAALAETMKKGTSFGAPCLLENVLAEMVISAVPSIEMVRFVNSGTEACMGVLRLARAFTNKEKFIKFEGCYHGHANAFLVKAGSGVATLGLPDSPGVPKAATSDTLTAPYNDIEAVAKLFEAHKGEISAVILEPVVGNSGFITPTPEFINGLRQLTKDNGALLIFDEVMTGFRLAYGGAQEYFGITPDLTTLGKIIGGGLPVGAYGGRRDIMEMVAPAGPMYQAGTLSGNPLAMTAGIHTLKRLKQPGTYEYLDKITKELTNGILEAGKKTGHPMCGGYISGMFGFFFAEGPVYNFADAKKSDTEKFGKFFRGMLEEGVYFAPSQFEAGFTSLAHTSEDIQFTISAAERVLGRI.

A chloroplast-targeting transit peptide spans 1 to 37 (MSATLTGSGTALGFSCSSKISKRVSSSPSTRCSIKMS). K313 carries the post-translational modification N6-(pyridoxal phosphate)lysine.

It belongs to the class-III pyridoxal-phosphate-dependent aminotransferase family. HemL subfamily. As to quaternary structure, homodimer. It depends on pyridoxal 5'-phosphate as a cofactor.

It localises to the plastid. Its subcellular location is the chloroplast. The enzyme catalyses (S)-4-amino-5-oxopentanoate = 5-aminolevulinate. Its pathway is porphyrin-containing compound metabolism; protoporphyrin-IX biosynthesis; 5-aminolevulinate from L-glutamyl-tRNA(Glu): step 2/2. It participates in porphyrin-containing compound metabolism; chlorophyll biosynthesis. The chain is Glutamate-1-semialdehyde 2,1-aminomutase, chloroplastic (GSA) from Brassica napus (Rape).